The chain runs to 776 residues: Endonuclease MutS2 (776 aa).

Position 330–337 (330–337 (GPNTGGKT)) interacts with ATP. The 76-residue stretch at 701 to 776 (LDLRGMRYEE…GSGATIAILK (76 aa)) folds into the Smr domain.

The protein belongs to the DNA mismatch repair MutS family. MutS2 subfamily. Homodimer. Binds to stalled ribosomes, contacting rRNA.

In terms of biological role, endonuclease that is involved in the suppression of homologous recombination and thus may have a key role in the control of bacterial genetic diversity. Its function is as follows. Acts as a ribosome collision sensor, splitting the ribosome into its 2 subunits. Detects stalled/collided 70S ribosomes which it binds and splits by an ATP-hydrolysis driven conformational change. Acts upstream of the ribosome quality control system (RQC), a ribosome-associated complex that mediates the extraction of incompletely synthesized nascent chains from stalled ribosomes and their subsequent degradation. Probably generates substrates for RQC. The polypeptide is Endonuclease MutS2 (Lactococcus lactis subsp. cremoris (strain SK11)).